The chain runs to 207 residues: MKFKDKLKFYVITDNNYSNEVVSVEEALKGGASSIQLRMKNSTTREMIEVGNELRKLTLEYDALFFVNDRLDVAQVVNADGIHVGIDDMPVSKIKEIAPNLIIGASAYNMEEMKTAESEGADYLGVGAVYSTNTKLDARNLGIDGLKSISKLSKLPIVAIGGINHSNVQNVLECGVSGVAVVSAIVGAENILKSAENMNELIKKYIK.

4-amino-2-methyl-5-(diphosphooxymethyl)pyrimidine contacts are provided by residues 36 to 40 (QLRMK) and Asn68. Residues Asp69 and Asp88 each coordinate Mg(2+). Ser106 is a 4-amino-2-methyl-5-(diphosphooxymethyl)pyrimidine binding site. Residue 132 to 134 (TNT) coordinates 2-[(2R,5Z)-2-carboxy-4-methylthiazol-5(2H)-ylidene]ethyl phosphate. Lys135 serves as a coordination point for 4-amino-2-methyl-5-(diphosphooxymethyl)pyrimidine. 2-[(2R,5Z)-2-carboxy-4-methylthiazol-5(2H)-ylidene]ethyl phosphate is bound by residues Gly162 and 182-183 (VS).

It belongs to the thiamine-phosphate synthase family. It depends on Mg(2+) as a cofactor.

It catalyses the reaction 2-[(2R,5Z)-2-carboxy-4-methylthiazol-5(2H)-ylidene]ethyl phosphate + 4-amino-2-methyl-5-(diphosphooxymethyl)pyrimidine + 2 H(+) = thiamine phosphate + CO2 + diphosphate. It carries out the reaction 2-(2-carboxy-4-methylthiazol-5-yl)ethyl phosphate + 4-amino-2-methyl-5-(diphosphooxymethyl)pyrimidine + 2 H(+) = thiamine phosphate + CO2 + diphosphate. The catalysed reaction is 4-methyl-5-(2-phosphooxyethyl)-thiazole + 4-amino-2-methyl-5-(diphosphooxymethyl)pyrimidine + H(+) = thiamine phosphate + diphosphate. Its pathway is cofactor biosynthesis; thiamine diphosphate biosynthesis; thiamine phosphate from 4-amino-2-methyl-5-diphosphomethylpyrimidine and 4-methyl-5-(2-phosphoethyl)-thiazole: step 1/1. Its function is as follows. Condenses 4-methyl-5-(beta-hydroxyethyl)thiazole monophosphate (THZ-P) and 2-methyl-4-amino-5-hydroxymethyl pyrimidine pyrophosphate (HMP-PP) to form thiamine monophosphate (TMP). The chain is Thiamine-phosphate synthase from Methanococcus maripaludis (strain C7 / ATCC BAA-1331).